The sequence spans 371 residues: Dual-specificity RNA methyltransferase RlmN (371 aa).

E92 functions as the Proton acceptor in the catalytic mechanism. The 240-residue stretch at 98–337 (EADRATLCVS…VTVRKTRGDD (240 aa)) folds into the Radical SAM core domain. C105 and C342 are joined by a disulfide. The [4Fe-4S] cluster site is built by C112, C116, and C119. Residues 166–167 (GE), S198, 220–222 (SLH), and N299 each bind S-adenosyl-L-methionine. The active-site S-methylcysteine intermediate is the C342.

This sequence belongs to the radical SAM superfamily. RlmN family. [4Fe-4S] cluster serves as cofactor.

The protein localises to the cytoplasm. The enzyme catalyses adenosine(2503) in 23S rRNA + 2 reduced [2Fe-2S]-[ferredoxin] + 2 S-adenosyl-L-methionine = 2-methyladenosine(2503) in 23S rRNA + 5'-deoxyadenosine + L-methionine + 2 oxidized [2Fe-2S]-[ferredoxin] + S-adenosyl-L-homocysteine. It catalyses the reaction adenosine(37) in tRNA + 2 reduced [2Fe-2S]-[ferredoxin] + 2 S-adenosyl-L-methionine = 2-methyladenosine(37) in tRNA + 5'-deoxyadenosine + L-methionine + 2 oxidized [2Fe-2S]-[ferredoxin] + S-adenosyl-L-homocysteine. Its function is as follows. Specifically methylates position 2 of adenine 2503 in 23S rRNA and position 2 of adenine 37 in tRNAs. m2A2503 modification seems to play a crucial role in the proofreading step occurring at the peptidyl transferase center and thus would serve to optimize ribosomal fidelity. The polypeptide is Dual-specificity RNA methyltransferase RlmN (Actinobacillus succinogenes (strain ATCC 55618 / DSM 22257 / CCUG 43843 / 130Z)).